The chain runs to 139 residues: MIDFDNRTDYEFDINKLNDIYNLLTDKDIELILTDDEEIKELNSQFRNKDKATDVLSFPLEAMPGMPLGSIVISIDTAKKGAEEFGHSVDDEIRLLFLHGLLHLLGYDHETDNGEMRAKEEEIIKKLNLPSSLIVRNED.

3 residues coordinate Zn(2+): His99, His103, and His109.

The protein belongs to the endoribonuclease YbeY family. It depends on Zn(2+) as a cofactor.

Its subcellular location is the cytoplasm. Single strand-specific metallo-endoribonuclease involved in late-stage 70S ribosome quality control and in maturation of the 3' terminus of the 16S rRNA. The polypeptide is Endoribonuclease YbeY (Nautilia profundicola (strain ATCC BAA-1463 / DSM 18972 / AmH)).